Reading from the N-terminus, the 1100-residue chain is DNA repair protein RAD1 (1100 aa).

The segment at Met-1 to Glu-47 is disordered. Residues Arg-20–Lys-30 are compositionally biased toward polar residues. The segment covering Ile-31–Glu-47 has biased composition (basic and acidic residues). Ser-613 carries the post-translational modification Phosphoserine. The region spanning Val-821–Glu-901 is the ERCC4 domain. Positions Glu-1063–Val-1100 are disordered. Over residues Glu-1065–Leu-1076 the composition is skewed to acidic residues. A Phosphoserine modification is found at Ser-1071. Residue Thr-1072 is modified to Phosphothreonine. Residues Thr-1082–Val-1100 show a composition bias toward basic and acidic residues.

Belongs to the XPF family. As to quaternary structure, component of the nucleotide excision repair factor 1 (NEF1) complex consisting of RAD1, RAD10 and RAD14. Interacts with SAW1.

It localises to the nucleus. Its function is as follows. Involved in nucleotide excision repair of DNA damaged with UV light, bulky adducts, or cross-linking agents. Along with RAD10 forms an endonuclease that specifically degrades single-stranded DNA. The sequence is that of DNA repair protein RAD1 (RAD1) from Saccharomyces cerevisiae (strain ATCC 204508 / S288c) (Baker's yeast).